The following is a 617-amino-acid chain: 1-deoxy-D-xylulose-5-phosphate synthase (617 aa).

Thiamine diphosphate is bound by residues His-77 and 118-120 (GHS). A Mg(2+)-binding site is contributed by Asp-149. Thiamine diphosphate-binding positions include 150–151 (GA), Asn-178, Tyr-287, and Glu-368. Asn-178 serves as a coordination point for Mg(2+).

This sequence belongs to the transketolase family. DXPS subfamily. In terms of assembly, homodimer. Requires Mg(2+) as cofactor. The cofactor is thiamine diphosphate.

It carries out the reaction D-glyceraldehyde 3-phosphate + pyruvate + H(+) = 1-deoxy-D-xylulose 5-phosphate + CO2. The protein operates within metabolic intermediate biosynthesis; 1-deoxy-D-xylulose 5-phosphate biosynthesis; 1-deoxy-D-xylulose 5-phosphate from D-glyceraldehyde 3-phosphate and pyruvate: step 1/1. In terms of biological role, catalyzes the acyloin condensation reaction between C atoms 2 and 3 of pyruvate and glyceraldehyde 3-phosphate to yield 1-deoxy-D-xylulose-5-phosphate (DXP). The protein is 1-deoxy-D-xylulose-5-phosphate synthase of Haemophilus ducreyi (strain 35000HP / ATCC 700724).